Consider the following 292-residue polypeptide: Phosphoribosylaminoimidazole-succinocarboxamide synthase (292 aa).

It belongs to the SAICAR synthetase family.

It carries out the reaction 5-amino-1-(5-phospho-D-ribosyl)imidazole-4-carboxylate + L-aspartate + ATP = (2S)-2-[5-amino-1-(5-phospho-beta-D-ribosyl)imidazole-4-carboxamido]succinate + ADP + phosphate + 2 H(+). It participates in purine metabolism; IMP biosynthesis via de novo pathway; 5-amino-1-(5-phospho-D-ribosyl)imidazole-4-carboxamide from 5-amino-1-(5-phospho-D-ribosyl)imidazole-4-carboxylate: step 1/2. This chain is Phosphoribosylaminoimidazole-succinocarboxamide synthase, found in Thermodesulfovibrio yellowstonii (strain ATCC 51303 / DSM 11347 / YP87).